Reading from the N-terminus, the 1249-residue chain is MRRGGWRKRTENDGWEKWGGYMAAKVQKLEEQFRTDAANQKDGTASAIFSGVAIYVNGYTDPSAEELRNLMMLHGGQYHVYYSRSKTTHIIATNLPNAKIKELKGEKVIRPEWIVESIKAGRLLSSAPYQLYTKPSAAQKSLNFNPVCKPEDPGPGPSNRAKQLNNRVNHIIKKIETESEVKANGLSSWNEDGVNDDFSFEDLEHTFPGRKQNGVMHPRDTAVIFNGHTHSSNGALKTQDCLVPVGNSVASRLSLDSTQEEKRAEKSNADFRDCTVQHLQHSTRSADALRSPHRTNSLSPSLHSNTKINGAHHSTVQGPSSTKSTSVLTLSKVAPSVPSKPSDCNFISDFYSRSRLHHISTWKCELTEFVNTLQRQSSGIFPGREKLKKVKTGRSSLVVTDTGTMSVLSSPRHQSCVMHVDMDCFFVSVGIRNRPDLKGKPVAVTSNRGTGTAPLRPGANPQLEWQYYQNRALRGKAADIPDSSVWENQDSTQTNGIDSVLSKAEIASCSYEARQVGIKNGMFFGYAKQLCPNLQAVPYDFHACREVAQAMYETLASYTHSIEAVSCDEALIDVTDILAETKLSPEEFAAALRIEIKDKTKCAASVGIGSNILLARMATKKAKPDGQYHLQPDEVDDFIRGQLVTNLPGVGRSMESKLASLGIKTCGDLQCLTMAKLQKEFGPKTGQMLYRFCRGLDDRPVRTEKERKSVSAEINYGIRFTQPKEAEAFLLSLSEEIQRRLEAAGMKGKRLTLKIMVRKPGAPIETAKFGGHGICDNIARTVTLDQATDSAKIIGKATLNMFHTMKLNISDMRGVGIQVNQLVPANSNLSTCSSRPSAQSSLFSGRPHSVRDLFQLQKAKKPTEEEHKEVFLAAVDLEVSSTSRACGLLSPLSAHLAASVSPDTNSGECSRKWNGLHSPVSGQSRLNLSIEVPSPSQIDQSVLEALPLDLREQIEQVCAAQQGEPRGKKKEPVNGCSSGVLPHPVGTVLLQIPEPQEPCNSDSKISVIALPAFSQVDPDVFAALPAELQKELKAAYDQRQRQGEDTTHQQPTSTSVPKNPLLQLKPPAMKDKRNKRKNLIGSPRKSPLKNKLLSSPAKTLPGAYGSPQKLMDGFLQHEGMASERPLEEVSASTPGAQDLSSLLPGQSSCFRPAAPNLAGAVEFSDVKTLLKEWITTISDPMEEDILQVVRYCTDLIEEKDLEKLDLVIKYMKRLMQQSVESVWNMAFDFILDNVQVVLQQTYGSTLKVT.

Positions 44–131 (TASAIFSGVA…RLLSSAPYQL (88 aa)) constitute a BRCT domain. A disordered region spans residues 253-323 (LSLDSTQEEK…STVQGPSSTK (71 aa)). Residues 259–275 (QEEKRAEKSNADFRDCT) show a composition bias toward basic and acidic residues. A compositionally biased stretch (polar residues) spans 294–319 (RTNSLSPSLHSNTKINGAHHSTVQGP). Residues 350–360 (FYSRSRLHHIS) are interaction with target DNA. DCTP contacts are provided by residues arginine 355, 421–425 (DMDCF), 508–514 (SCSYEAR), asparagine 520, and aspartate 568. Positions 417-651 (VMHVDMDCFF…QLVTNLPGVG (235 aa)) constitute a UmuC domain. Aspartate 421 lines the Mg(2+) pocket. Mg(2+) contacts are provided by aspartate 568 and glutamate 569. Interaction with target DNA stretches follow at residues 651-654 (GRSM) and 707-715 (RKSVSAEIN). The span at 1035-1047 (AYDQRQRQGEDTT) shows a compositional bias: basic and acidic residues. Positions 1035–1109 (AYDQRQRQGE…LPGAYGSPQK (75 aa)) are disordered. Residues 1048 to 1057 (HQQPTSTSVP) are compositionally biased toward polar residues. Positions 1072 to 1078 (KRNKRKN) match the Nuclear localization signal motif. The tract at residues 1150-1249 (FRPAAPNLAG…QTYGSTLKVT (100 aa)) is protein interaction domain; mediates interaction with DNA polymerase zeta.

Belongs to the DNA polymerase type-Y family. Interacts with FAAP20. Monomer. Interacts with the DNA polymerase zeta which is composed of REV3L and MAD2L2; the interaction with MAD2L2 is direct and requires that REV3L is in its closed conformation. Interacts with POLH, POLI and POLK. Ubiquitous.

The protein localises to the nucleus. Its function is as follows. Deoxycytidyl transferase involved in DNA repair. Transfers a dCMP residue from dCTP to the 3'-end of a DNA primer in a template-dependent reaction. May assist in the first step in the bypass of abasic lesions by the insertion of a nucleotide opposite the lesion. Required for normal induction of mutations by physical and chemical agents. The sequence is that of DNA repair protein REV1 (Rev1) from Mus musculus (Mouse).